Consider the following 340-residue polypeptide: MPDPRFFEDLGPATLAELASLSGARLADPATGHQLVSHVAPLESAGPGAVTFLSDPKRLADLAGLSGAVCFLRPEHAADAPPGCALLLTNHPQASWAAAAHRLHASRRHDGAQPVHPDCELEEGVLLAPGVVIGQGARIGRGTQVGPGVVIGPGVAVGRDCRIGANAVIGFALVGDRVSIHAGAVIGEAGFGAAGGPTGVVDLPQLGRVVLQDGVTIGANSCVDRGAFGDTTIGENSKIDNLVHVAHNVRLGRNCVAAAFTGISGSTVVGDGVAFGGKAGVADHLTIGAGANIGAAASVFKSVPAGETWTGFPARPLKRWLRETAWLSRKAGGRGIKGPE.

Residue His-247 is the Proton acceptor of the active site.

Belongs to the transferase hexapeptide repeat family. LpxD subfamily. As to quaternary structure, homotrimer.

The enzyme catalyses a UDP-3-O-[(3R)-3-hydroxyacyl]-alpha-D-glucosamine + a (3R)-hydroxyacyl-[ACP] = a UDP-2-N,3-O-bis[(3R)-3-hydroxyacyl]-alpha-D-glucosamine + holo-[ACP] + H(+). It participates in bacterial outer membrane biogenesis; LPS lipid A biosynthesis. Functionally, catalyzes the N-acylation of UDP-3-O-acylglucosamine using 3-hydroxyacyl-ACP as the acyl donor. Is involved in the biosynthesis of lipid A, a phosphorylated glycolipid that anchors the lipopolysaccharide to the outer membrane of the cell. The protein is UDP-3-O-acylglucosamine N-acyltransferase of Caulobacter sp. (strain K31).